Here is a 252-residue protein sequence, read N- to C-terminus: Probable transcriptional regulatory protein all4276 (252 aa).

Belongs to the TACO1 family.

It localises to the cytoplasm. The sequence is that of Probable transcriptional regulatory protein all4276 from Nostoc sp. (strain PCC 7120 / SAG 25.82 / UTEX 2576).